The sequence spans 176 residues: Ribosome maturation factor RimM (176 aa).

Positions 97–176 (EDEFYWRDLI…QILVDWDPDF (80 aa)) constitute a PRC barrel domain.

The protein belongs to the RimM family. In terms of assembly, binds ribosomal protein uS19.

It is found in the cytoplasm. Functionally, an accessory protein needed during the final step in the assembly of 30S ribosomal subunit, possibly for assembly of the head region. Essential for efficient processing of 16S rRNA. May be needed both before and after RbfA during the maturation of 16S rRNA. It has affinity for free ribosomal 30S subunits but not for 70S ribosomes. The protein is Ribosome maturation factor RimM of Shewanella loihica (strain ATCC BAA-1088 / PV-4).